The following is a 507-amino-acid chain: Carnosic acid synthase (507 aa).

The helical transmembrane segment at Val6–Trp23 threads the bilayer. Residue Cys450 participates in heme binding.

This sequence belongs to the cytochrome P450 family. Requires heme as cofactor. Expressed in glandular trichomes of young leaves.

The protein localises to the membrane. It carries out the reaction 11-hydroxyferruginol + 3 reduced [NADPH--hemoprotein reductase] + 3 O2 = carnosate + 3 oxidized [NADPH--hemoprotein reductase] + 4 H2O + 4 H(+). The enzyme catalyses miltiradiene + 2 reduced [NADPH--hemoprotein reductase] + 2 O2 = miltiradien-20-al + 2 oxidized [NADPH--hemoprotein reductase] + 3 H2O + 2 H(+). The catalysed reaction is ferruginol + 3 reduced [NADPH--hemoprotein reductase] + 3 O2 = pisiferate + 3 oxidized [NADPH--hemoprotein reductase] + 4 H2O + 4 H(+). Its pathway is secondary metabolite biosynthesis; terpenoid biosynthesis. Functionally, monooxygenase involved in the biosynthesis of carnosate, a potent antioxidant labdane-related diterpene natural product. Catalyzes the oxidation of 11-hydroxyferruginol to produce carnosate. Mediates the conversion of miltiradien into miltiradien-20-al. Also involved in the production of pisiferic acid and derivative products from ferruginol. The sequence is that of Carnosic acid synthase from Rosmarinus officinalis (Rosemary).